A 77-amino-acid chain; its full sequence is Large ribosomal subunit protein bL28 (77 aa).

Belongs to the bacterial ribosomal protein bL28 family.

The chain is Large ribosomal subunit protein bL28 from Ralstonia pickettii (strain 12J).